The sequence spans 227 residues: MASSDVKLIGAWASPFVMRPRIALNLKSVPYEFLQETFGSKSELLLKSNPVHKKIPVLLHADKPVSESNIIVEYIDDTWSSSGPSILPSDPYDRAMARFWAAYIDEKWFVALRGFLKAGGEEEKKAVIAQLEEGNAFLEKAFIDCSKGKPFFNGDNIGYLDIALGCFLAWLRVTELAVSYKILDEAKTPSLSKWAENFCNDPAVKPVMPETAKLAEFAKKIFPKPQA.

The GST N-terminal domain maps to 4 to 83; it reads SDVKLIGAWA…YIDDTWSSSG (80 aa). Residues 14-15, 40-41, 54-55, and 67-68 each bind glutathione; these read SP, SK, KI, and ES. Residues 90 to 222 form the GST C-terminal domain; the sequence is DPYDRAMARF…KLAEFAKKIF (133 aa).

This sequence belongs to the GST superfamily. Tau family.

It is found in the cytoplasm. The protein resides in the cytosol. The enzyme catalyses RX + glutathione = an S-substituted glutathione + a halide anion + H(+). Involved in light signaling, mainly phyA-mediated photomorphogenesis and in the integration of various phytohormone signals to modulate various aspects of plant development by affecting glutathione pools. In vitro, possesses glutathione S-transferase activity toward 1-chloro-2,4-dinitrobenzene (CDNB) and benzyl isothiocyanate (BITC). The protein is Glutathione S-transferase U17 (GSTU17) of Arabidopsis thaliana (Mouse-ear cress).